A 310-amino-acid chain; its full sequence is Endo-1,4-beta-xylanase B (310 aa).

The N-terminal stretch at M1 to A19 is a signal peptide. A GH11 domain is found at A33–S223. The active-site Nucleophile is E119. E210 serves as the catalytic Proton donor. A compositionally biased stretch (low complexity) spans A218 to S227. The interval A218–G274 is disordered. A compositionally biased stretch (gly residues) spans S228 to S246. A compositionally biased stretch (low complexity) spans G247–S256. The span at T257 to G274 shows a compositional bias: gly residues. The CBM1 domain maps to N275–L310.

Belongs to the glycosyl hydrolase 11 (cellulase G) family.

It localises to the secreted. It carries out the reaction Endohydrolysis of (1-&gt;4)-beta-D-xylosidic linkages in xylans.. The protein operates within glycan degradation; xylan degradation. Its function is as follows. Endo-1,4-beta-xylanase involved in the hydrolysis of xylan, a major structural heterogeneous polysaccharide found in plant biomass representing the second most abundant polysaccharide in the biosphere, after cellulose. Hydrolyzes birchwood xylan, beechwood xylan, and oat spelt xylan to produce short-chain xylooligosaccharides, xylopentaose, xylotriose, and xylobiose as the main products. The polypeptide is Endo-1,4-beta-xylanase B (xynB) (Penicillium oxalicum).